The chain runs to 343 residues: Glyceraldehyde-3-phosphate dehydrogenase 1 (343 aa).

NAD(+)-binding positions include 13–14 (RI), Asp35, Arg79, and Ser121. D-glyceraldehyde 3-phosphate contacts are provided by residues 154 to 156 (SCT), Thr185, 214 to 215 (TG), and Arg237. Cys155 functions as the Nucleophile in the catalytic mechanism. Position 319 (Asn319) interacts with NAD(+).

Belongs to the glyceraldehyde-3-phosphate dehydrogenase family. In terms of assembly, homotetramer.

It localises to the cytoplasm. It carries out the reaction D-glyceraldehyde 3-phosphate + phosphate + NAD(+) = (2R)-3-phospho-glyceroyl phosphate + NADH + H(+). It participates in carbohydrate degradation; glycolysis; pyruvate from D-glyceraldehyde 3-phosphate: step 1/5. Catalyzes the oxidative phosphorylation of glyceraldehyde 3-phosphate (G3P) to 1,3-bisphosphoglycerate (BPG) using the cofactor NAD. The first reaction step involves the formation of a hemiacetal intermediate between G3P and a cysteine residue, and this hemiacetal intermediate is then oxidized to a thioester, with concomitant reduction of NAD to NADH. The reduced NADH is then exchanged with the second NAD, and the thioester is attacked by a nucleophilic inorganic phosphate to produce BPG. This Nostoc sp. (strain PCC 7120 / SAG 25.82 / UTEX 2576) protein is Glyceraldehyde-3-phosphate dehydrogenase 1 (gap1).